Reading from the N-terminus, the 388-residue chain is Xylose isomerase (388 aa).

Active-site residues include His54 and Asp57. Positions 181, 217, 220, 245, 255, 257, and 287 each coordinate Mg(2+).

This sequence belongs to the xylose isomerase family. In terms of assembly, homotetramer. It depends on Mg(2+) as a cofactor.

It localises to the cytoplasm. It carries out the reaction alpha-D-xylose = alpha-D-xylulofuranose. Involved in D-xylose catabolism. This chain is Xylose isomerase (xylA), found in Streptomyces rubiginosus.